A 734-amino-acid chain; its full sequence is DNA replication licensing factor MCM5 (734 aa).

N-acetylserine is present on serine 2. The MCM domain maps to 331–537; that stretch reads IYELISKSIA…RDVMLAKHVI (207 aa). Arginine 371 is a binding site for ADP. N6-acetyllysine is present on residues lysine 392 and lysine 396. Positions 512 to 515 match the Arginine finger motif; that stretch reads SRFD. At serine 605 the chain carries Phosphoserine.

This sequence belongs to the MCM family. In terms of assembly, component of the MCM2-7 complex. The complex forms a toroidal hexameric ring with the proposed subunit order MCM2-MCM6-MCM4-MCM7-MCM3-MCM5. Component of the CMG helicase complex, a hexameric ring of related MCM2-7 subunits stabilized by CDC45 and the tetrameric GINS complex. Interacts with ANKRD17. Interacts with MCMBP. Interacts with TONSL; the interaction is direct.

It is found in the nucleus. Its subcellular location is the chromosome. It localises to the cytoplasm. The protein localises to the cytosol. The catalysed reaction is ATP + H2O = ADP + phosphate + H(+). Functionally, acts as a component of the MCM2-7 complex (MCM complex) which is the replicative helicase essential for 'once per cell cycle' DNA replication initiation and elongation in eukaryotic cells. Core component of CDC45-MCM-GINS (CMG) helicase, the molecular machine that unwinds template DNA during replication, and around which the replisome is built. The active ATPase sites in the MCM2-7 ring are formed through the interaction surfaces of two neighboring subunits such that a critical structure of a conserved arginine finger motif is provided in trans relative to the ATP-binding site of the Walker A box of the adjacent subunit. The six ATPase active sites, however, are likely to contribute differentially to the complex helicase activity. This chain is DNA replication licensing factor MCM5, found in Bos taurus (Bovine).